Here is a 504-residue protein sequence, read N- to C-terminus: Hydroxyisobutyraldehyde dehydrogenase (504 aa).

Glu-260 functions as the Proton acceptor in the catalytic mechanism. Cys-294 acts as the Nucleophile in catalysis.

It belongs to the aldehyde dehydrogenase family.

It localises to the cytoplasm. The enzyme catalyses 2-hydroxy-2-methylpropanal + NAD(+) + H2O = 2-hydroxy-2-methylpropanoate + NADH + 2 H(+). Its function is as follows. Involved in the degradation of methyl tert-butyl ether (MTBE). Catalyzes the conversion of hydroxyisobutyraldehyde to hydroxyisobutyric acid (HIBA). The sequence is that of Hydroxyisobutyraldehyde dehydrogenase from Mycolicibacterium austroafricanum (Mycobacterium austroafricanum).